Here is a 478-residue protein sequence, read N- to C-terminus: Signal recognition particle receptor FtsY (478 aa).

2 stretches are compositionally biased toward basic and acidic residues: residues 14–33 (KDKA…ERGN) and 45–56 (AEAHDAVDKDPV). A disordered region spans residues 14–94 (KDKAETEERP…DAPLLPGAEL (81 aa)). Over residues 71 to 86 (EAVDVAPAEDDEEEDA) the composition is skewed to acidic residues. GTP contacts are provided by residues 283 to 290 (GVNGTGKT), 365 to 369 (DTAGR), and 429 to 432 (TKLD).

The protein belongs to the GTP-binding SRP family. FtsY subfamily. In terms of assembly, part of the signal recognition particle protein translocation system, which is composed of SRP and FtsY. SRP is a ribonucleoprotein composed of Ffh and a 4.5S RNA molecule.

Its subcellular location is the cell inner membrane. The protein resides in the cytoplasm. It catalyses the reaction GTP + H2O = GDP + phosphate + H(+). Its function is as follows. Involved in targeting and insertion of nascent membrane proteins into the cytoplasmic membrane. Acts as a receptor for the complex formed by the signal recognition particle (SRP) and the ribosome-nascent chain (RNC). Interaction with SRP-RNC leads to the transfer of the RNC complex to the Sec translocase for insertion into the membrane, the hydrolysis of GTP by both Ffh and FtsY, and the dissociation of the SRP-FtsY complex into the individual components. This Agrobacterium fabrum (strain C58 / ATCC 33970) (Agrobacterium tumefaciens (strain C58)) protein is Signal recognition particle receptor FtsY.